The following is an 808-amino-acid chain: uncharacterized protein (808 aa).

35–42 (GPNNVGKT) is an ATP binding site.

This is an uncharacterized protein from Methanocaldococcus jannaschii (strain ATCC 43067 / DSM 2661 / JAL-1 / JCM 10045 / NBRC 100440) (Methanococcus jannaschii).